Reading from the N-terminus, the 179-residue chain is Large ribosomal subunit protein uL5 (179 aa).

It belongs to the universal ribosomal protein uL5 family. Part of the 50S ribosomal subunit; part of the 5S rRNA/L5/L18/L25 subcomplex. Contacts the 5S rRNA and the P site tRNA. Forms a bridge to the 30S subunit in the 70S ribosome.

Its function is as follows. This is one of the proteins that bind and probably mediate the attachment of the 5S RNA into the large ribosomal subunit, where it forms part of the central protuberance. In the 70S ribosome it contacts protein S13 of the 30S subunit (bridge B1b), connecting the 2 subunits; this bridge is implicated in subunit movement. Contacts the P site tRNA; the 5S rRNA and some of its associated proteins might help stabilize positioning of ribosome-bound tRNAs. The chain is Large ribosomal subunit protein uL5 from Dictyoglomus turgidum (strain DSM 6724 / Z-1310).